A 445-amino-acid polypeptide reads, in one-letter code: Tubulin beta-3 chain (445 aa).

GTP is bound by residues glutamine 11, glutamate 69, serine 138, glycine 142, threonine 143, glycine 144, asparagine 204, and asparagine 226. Residue glutamate 69 participates in Mg(2+) binding. A disordered region spans residues 421–445; it reads EYQQYQDATADEEEEYDEEEEEEAA. Over residues 429 to 445 the composition is skewed to acidic residues; the sequence is TADEEEEYDEEEEEEAA.

Belongs to the tubulin family. In terms of assembly, dimer of alpha and beta chains. A typical microtubule is a hollow water-filled tube with an outer diameter of 25 nm and an inner diameter of 15 nM. Alpha-beta heterodimers associate head-to-tail to form protofilaments running lengthwise along the microtubule wall with the beta-tubulin subunit facing the microtubule plus end conferring a structural polarity. Microtubules usually have 13 protofilaments but different protofilament numbers can be found in some organisms and specialized cells. Requires Mg(2+) as cofactor.

It is found in the cytoplasm. The protein resides in the cytoskeleton. Functionally, tubulin is the major constituent of microtubules, a cylinder consisting of laterally associated linear protofilaments composed of alpha- and beta-tubulin heterodimers. Microtubules grow by the addition of GTP-tubulin dimers to the microtubule end, where a stabilizing cap forms. Below the cap, tubulin dimers are in GDP-bound state, owing to GTPase activity of alpha-tubulin. This is Tubulin beta-3 chain (TUBB3) from Triticum aestivum (Wheat).